The chain runs to 85 residues: Phosphoribosyl-AMP cyclohydrolase (85 aa).

Residue Asp-48 participates in Mg(2+) binding. Cys-49 contacts Zn(2+). Positions 50 and 52 each coordinate Mg(2+). 2 residues coordinate Zn(2+): Cys-65 and Cys-72.

Belongs to the PRA-CH family. In terms of assembly, homodimer. Mg(2+) is required as a cofactor. The cofactor is Zn(2+).

The protein resides in the cytoplasm. It carries out the reaction 1-(5-phospho-beta-D-ribosyl)-5'-AMP + H2O = 1-(5-phospho-beta-D-ribosyl)-5-[(5-phospho-beta-D-ribosylamino)methylideneamino]imidazole-4-carboxamide. It participates in amino-acid biosynthesis; L-histidine biosynthesis; L-histidine from 5-phospho-alpha-D-ribose 1-diphosphate: step 3/9. Its function is as follows. Catalyzes the hydrolysis of the adenine ring of phosphoribosyl-AMP. The protein is Phosphoribosyl-AMP cyclohydrolase (hisI) of Saccharolobus solfataricus (strain ATCC 35092 / DSM 1617 / JCM 11322 / P2) (Sulfolobus solfataricus).